Consider the following 228-residue polypeptide: MGTKRSSLKGSLLLLLLMSSLFLFKSVESLPICPSGAVNCQVSLSDLFDRAVMLSHYIHSPSSEMFNEFDERYAQGRGFITKAINSCHTSSLSTPEDKEQAQQIHHEDLLNLILRVLRSWNDPLYHLVTEVRSMQEAPDTILSKAMEIEEQNKRLLEGMEKIVGQVHPGDRENEVYSVWSGLPSLQMADEDTRLFAFYNLLHCLRRDSHKIDNYLKLLKCRLIHDSNC.

Residues 1 to 29 form the signal peptide; it reads MGTKRSSLKGSLLLLLLMSSLFLFKSVES. Residues Cys-33 and Cys-40 are joined by a disulfide bond. A phosphoserine mark is found at Ser-55, Ser-63, and Ser-119. 2 disulfides stabilise this stretch: Cys-87-Cys-203 and Cys-220-Cys-228.

Belongs to the somatotropin/prolactin family. Interacts with PRLR.

It localises to the secreted. In terms of biological role, prolactin acts primarily on the mammary gland by promoting lactation, mammogenesis, mitogenesis and osmoregulation. In Trichosurus vulpecula (Brush-tailed possum), this protein is Prolactin (PRL).